Consider the following 405-residue polypeptide: S-adenosylmethionine synthase (405 aa).

139-144 is an ATP binding site; sequence GKGSAD.

The protein belongs to the AdoMet synthase 2 family. Requires Mg(2+) as cofactor.

The enzyme catalyses L-methionine + ATP + H2O = S-adenosyl-L-methionine + phosphate + diphosphate. It participates in amino-acid biosynthesis; S-adenosyl-L-methionine biosynthesis; S-adenosyl-L-methionine from L-methionine: step 1/1. Its function is as follows. Catalyzes the formation of S-adenosylmethionine from methionine and ATP. This is S-adenosylmethionine synthase from Sulfurisphaera tokodaii (strain DSM 16993 / JCM 10545 / NBRC 100140 / 7) (Sulfolobus tokodaii).